A 387-amino-acid chain; its full sequence is S-adenosylmethionine synthase (387 aa).

Residue histidine 17 participates in ATP binding. A Mg(2+)-binding site is contributed by aspartate 19. Glutamate 45 provides a ligand contact to K(+). Residues glutamate 58 and glutamine 101 each contribute to the L-methionine site. The segment at glutamine 101–arginine 111 is flexible loop. Residues aspartate 168 to lysine 170, arginine 234 to phenylalanine 235, aspartate 243, arginine 249 to lysine 250, alanine 266, and lysine 270 each bind ATP. L-methionine is bound at residue aspartate 243. Lysine 274 is a binding site for L-methionine.

This sequence belongs to the AdoMet synthase family. In terms of assembly, homotetramer; dimer of dimers. Requires Mg(2+) as cofactor. K(+) is required as a cofactor.

The protein resides in the cytoplasm. It carries out the reaction L-methionine + ATP + H2O = S-adenosyl-L-methionine + phosphate + diphosphate. Its pathway is amino-acid biosynthesis; S-adenosyl-L-methionine biosynthesis; S-adenosyl-L-methionine from L-methionine: step 1/1. Its function is as follows. Catalyzes the formation of S-adenosylmethionine (AdoMet) from methionine and ATP. The overall synthetic reaction is composed of two sequential steps, AdoMet formation and the subsequent tripolyphosphate hydrolysis which occurs prior to release of AdoMet from the enzyme. This is S-adenosylmethionine synthase from Bordetella petrii (strain ATCC BAA-461 / DSM 12804 / CCUG 43448).